The following is a 626-amino-acid chain: Probable potassium transport system protein Kup (626 aa).

The next 12 membrane-spanning stretches (helical) occupy residues V13–Y33, V53–I73, F102–P122, H138–I158, L169–V189, F207–T227, W248–L268, P277–A297, I338–F358, A367–L387, W399–F419, and I421–T441.

Belongs to the HAK/KUP transporter (TC 2.A.72) family.

It localises to the cell inner membrane. It carries out the reaction K(+)(in) + H(+)(in) = K(+)(out) + H(+)(out). Its function is as follows. Transport of potassium into the cell. Likely operates as a K(+):H(+) symporter. The chain is Probable potassium transport system protein Kup from Bordetella avium (strain 197N).